The primary structure comprises 91 residues: Large ribosomal subunit protein uL23c (91 aa).

It belongs to the universal ribosomal protein uL23 family. Part of the 50S ribosomal subunit.

The protein localises to the plastid. Its subcellular location is the chloroplast. Its function is as follows. Binds to 23S rRNA. The polypeptide is Large ribosomal subunit protein uL23c (rpl23) (Picea abies (Norway spruce)).